We begin with the raw amino-acid sequence, 157 residues long: UPF0225 protein PSPPH_1399 (157 aa).

This sequence belongs to the UPF0225 family.

The sequence is that of UPF0225 protein PSPPH_1399 from Pseudomonas savastanoi pv. phaseolicola (strain 1448A / Race 6) (Pseudomonas syringae pv. phaseolicola (strain 1448A / Race 6)).